The following is a 433-amino-acid chain: Homogentisate 1,2-dioxygenase (433 aa).

Histidine 288 (proton acceptor) is an active-site residue. Residues histidine 331 and glutamate 337 each coordinate Fe cation. Positions 346 and 367 each coordinate homogentisate. Histidine 367 contributes to the Fe cation binding site.

It belongs to the homogentisate dioxygenase family. As to quaternary structure, hexamer; dimer of trimers. It depends on Fe cation as a cofactor.

The catalysed reaction is homogentisate + O2 = 4-maleylacetoacetate + H(+). The protein operates within amino-acid degradation; L-phenylalanine degradation; acetoacetate and fumarate from L-phenylalanine: step 4/6. Functionally, involved in the catabolism of homogentisate (2,5-dihydroxyphenylacetate or 2,5-OH-PhAc), a central intermediate in the degradation of phenylalanine and tyrosine. Catalyzes the oxidative ring cleavage of the ar omatic ring of 2,5-dihydroxyphenylacetate to yield maleylacetoacetate. The polypeptide is Homogentisate 1,2-dioxygenase (Pseudomonas putida (strain ATCC 47054 / DSM 6125 / CFBP 8728 / NCIMB 11950 / KT2440)).